A 256-amino-acid polypeptide reads, in one-letter code: Glutamate racemase (256 aa).

Substrate-binding positions include 5–6 (DS) and 37–38 (YG). The active-site Proton donor/acceptor is cysteine 69. Substrate is bound at residue 70–71 (NT). Residue cysteine 181 is the Proton donor/acceptor of the active site. 182-183 (TH) is a binding site for substrate.

The protein belongs to the aspartate/glutamate racemases family.

The enzyme catalyses L-glutamate = D-glutamate. The protein operates within cell wall biogenesis; peptidoglycan biosynthesis. Its function is as follows. Provides the (R)-glutamate required for cell wall biosynthesis. The sequence is that of Glutamate racemase from Buchnera aphidicola subsp. Schizaphis graminum (strain Sg).